Here is a 553-residue protein sequence, read N- to C-terminus: PE cleavage protein A (553 aa).

The 92-residue stretch at 1–92 folds into the PE domain; it reads MSLLVVAPEW…SAGSYSAAEA (92 aa). Residue aspartate 293 is part of the active site.

This sequence belongs to the mycobacterial PE family. PGRS subfamily. Undergoes auto-proteolytic processing.

The protein localises to the secreted. Its subcellular location is the cell surface. Functionally, aspartic protease that processes the lipase LipY and other PE_PGRS proteins. Can also cleave itself. Cleaves LipY both inside the PE domain, before amino acid 98, and after amino acids 136 and 149. Involved in virulence. The sequence is that of PE cleavage protein A from Mycobacterium marinum (strain ATCC BAA-535 / M).